A 153-amino-acid polypeptide reads, in one-letter code: Holo-[acyl-carrier-protein] synthase (153 aa).

Residues Asp24 and Glu78 each contribute to the Mg(2+) site.

Belongs to the P-Pant transferase superfamily. AcpS family. Mg(2+) is required as a cofactor.

The protein resides in the cytoplasm. The enzyme catalyses apo-[ACP] + CoA = holo-[ACP] + adenosine 3',5'-bisphosphate + H(+). In terms of biological role, transfers the 4'-phosphopantetheine moiety from coenzyme A to a Ser of acyl-carrier-protein. This chain is Holo-[acyl-carrier-protein] synthase, found in Bordetella pertussis (strain Tohama I / ATCC BAA-589 / NCTC 13251).